The following is a 261-amino-acid chain: Putative glyoxylase CFP32 (261 aa).

VOC domains follow at residues 11-129 and 143-257; these read TPNW…LWQA and TLIW…VLKP. Glyoxalase regions lie at residues 13–123 and 149–252; these read NWVD…TGAA and LLTD…GAIF.

This Mycobacterium bovis (strain ATCC BAA-935 / AF2122/97) protein is Putative glyoxylase CFP32.